Here is a 365-residue protein sequence, read N- to C-terminus: Chorismate synthase (365 aa).

Arginine 48 and arginine 54 together coordinate NADP(+). FMN contacts are provided by residues 125–127, 237–238, glycine 277, 292–296, and arginine 318; these read RAS, NA, and KPTSS.

The protein belongs to the chorismate synthase family. Homotetramer. The cofactor is FMNH2.

The enzyme catalyses 5-O-(1-carboxyvinyl)-3-phosphoshikimate = chorismate + phosphate. It functions in the pathway metabolic intermediate biosynthesis; chorismate biosynthesis; chorismate from D-erythrose 4-phosphate and phosphoenolpyruvate: step 7/7. Catalyzes the anti-1,4-elimination of the C-3 phosphate and the C-6 proR hydrogen from 5-enolpyruvylshikimate-3-phosphate (EPSP) to yield chorismate, which is the branch point compound that serves as the starting substrate for the three terminal pathways of aromatic amino acid biosynthesis. This reaction introduces a second double bond into the aromatic ring system. The sequence is that of Chorismate synthase from Polaromonas sp. (strain JS666 / ATCC BAA-500).